We begin with the raw amino-acid sequence, 469 residues long: Protein apterous (469 aa).

Disordered regions lie at residues 21 to 44 and 111 to 141; these read GPGAREKSPTPPVAHQGSNQCGSA and EVSDETTSGISFKTEPFGPPSSPESTSDSKI. 2 LIM zinc-binding domains span residues 148–200 and 210–263; these read CSGC…CKND and CSRC…CRTH. Residues 367 to 426 constitute a DNA-binding region (homeobox); that stretch reads TKRMRTSFKHHQLRTMKSYFAINHNPDAKDLKQLSQKTGLPKRVLQVWFQNARAKWRRMM.

As to expression, expressed in PNS and CNS.

It is found in the nucleus. Functionally, required for the normal development of the wing and halter imaginal disks. This Drosophila melanogaster (Fruit fly) protein is Protein apterous (ap).